A 145-amino-acid polypeptide reads, in one-letter code: Endoribonuclease YbeY (145 aa).

3 residues coordinate Zn(2+): His-109, His-113, and His-119.

Belongs to the endoribonuclease YbeY family. Zn(2+) serves as cofactor.

It localises to the cytoplasm. Single strand-specific metallo-endoribonuclease involved in late-stage 70S ribosome quality control and in maturation of the 3' terminus of the 16S rRNA. The chain is Endoribonuclease YbeY from Ruthia magnifica subsp. Calyptogena magnifica.